A 216-amino-acid chain; its full sequence is Protein Syd (216 aa).

This sequence belongs to the Syd family.

The protein localises to the cell inner membrane. Functionally, interacts with the SecY protein in vivo. May bind preferentially to an uncomplexed state of SecY, thus functioning either as a chelating agent for excess SecY in the cell or as a regulatory factor that negatively controls the translocase function. This Shewanella sp. (strain ANA-3) protein is Protein Syd.